A 239-amino-acid chain; its full sequence is Purine nucleoside phosphorylase DeoD-type (239 aa).

An a purine D-ribonucleoside-binding site is contributed by H5. Positions 21 and 25 each coordinate phosphate. K27 bears the N6-acetyllysine mark. Phosphate contacts are provided by residues R44 and 88 to 91; that span reads RVGS. A purine D-ribonucleoside is bound by residues 180-182 and 204-205; these read EME and SD. D205 functions as the Proton donor in the catalytic mechanism.

This sequence belongs to the PNP/UDP phosphorylase family. Homohexamer; trimer of homodimers.

The enzyme catalyses a purine D-ribonucleoside + phosphate = a purine nucleobase + alpha-D-ribose 1-phosphate. The catalysed reaction is a purine 2'-deoxy-D-ribonucleoside + phosphate = a purine nucleobase + 2-deoxy-alpha-D-ribose 1-phosphate. Its function is as follows. Catalyzes the reversible phosphorolytic breakdown of the N-glycosidic bond in the beta-(deoxy)ribonucleoside molecules, with the formation of the corresponding free purine bases and pentose-1-phosphate. This Shigella dysenteriae serotype 1 (strain Sd197) protein is Purine nucleoside phosphorylase DeoD-type.